We begin with the raw amino-acid sequence, 624 residues long: Penicillin-binding protein 4 (624 aa).

The first 21 residues, 1–21 (MTMLRKIIGWILLLCIIPLFA), serve as a signal peptide directing secretion. Glu-96 (proton donor; for transglycosylase activity) is an active-site residue. Ser-388 functions as the Acyl-ester intermediate; for transpeptidase activity in the catalytic mechanism.

The protein in the N-terminal section; belongs to the glycosyltransferase 51 family. In the C-terminal section; belongs to the transpeptidase family. The N-terminus is blocked.

It is found in the cell membrane. It carries out the reaction [GlcNAc-(1-&gt;4)-Mur2Ac(oyl-L-Ala-gamma-D-Glu-L-Lys-D-Ala-D-Ala)](n)-di-trans,octa-cis-undecaprenyl diphosphate + beta-D-GlcNAc-(1-&gt;4)-Mur2Ac(oyl-L-Ala-gamma-D-Glu-L-Lys-D-Ala-D-Ala)-di-trans,octa-cis-undecaprenyl diphosphate = [GlcNAc-(1-&gt;4)-Mur2Ac(oyl-L-Ala-gamma-D-Glu-L-Lys-D-Ala-D-Ala)](n+1)-di-trans,octa-cis-undecaprenyl diphosphate + di-trans,octa-cis-undecaprenyl diphosphate + H(+). It catalyses the reaction Preferential cleavage: (Ac)2-L-Lys-D-Ala-|-D-Ala. Also transpeptidation of peptidyl-alanyl moieties that are N-acyl substituents of D-alanine.. Cell wall formation. Synthesis of cross-linked peptidoglycan from the lipid intermediates. The enzyme has a penicillin-insensitive transglycosylase N-terminal domain (formation of linear glycan strands) and a penicillin-sensitive transpeptidase C-terminal domain (cross-linking of the peptide subunits). Has a partially redundant function with PBP-2A (pbpA) during spore outgrowth. The sequence is that of Penicillin-binding protein 4 from Bacillus subtilis (strain 168).